A 151-amino-acid polypeptide reads, in one-letter code: UPF0208 membrane protein YfbV (151 aa).

Transmembrane regions (helical) follow at residues 46-65 and 69-91; these read FGIR…QIAL and LGPA…WWLG.

Belongs to the UPF0208 family.

It is found in the cell inner membrane. This Photorhabdus temperata protein is UPF0208 membrane protein YfbV (yfbV).